Reading from the N-terminus, the 224-residue chain is ATP-dependent dethiobiotin synthetase BioD (224 aa).

An ATP-binding site is contributed by G12 to F17. T16 serves as a coordination point for Mg(2+). Residue K37 is part of the active site. Residue T41 participates in substrate binding. E107 serves as a coordination point for Mg(2+). ATP is bound by residues E107–G110, G167–S168, P197–G199, and E204.

Belongs to the dethiobiotin synthetase family. As to quaternary structure, homodimer. Requires Mg(2+) as cofactor.

The protein localises to the cytoplasm. It catalyses the reaction (7R,8S)-7,8-diammoniononanoate + CO2 + ATP = (4R,5S)-dethiobiotin + ADP + phosphate + 3 H(+). The protein operates within cofactor biosynthesis; biotin biosynthesis; biotin from 7,8-diaminononanoate: step 1/2. Functionally, catalyzes a mechanistically unusual reaction, the ATP-dependent insertion of CO2 between the N7 and N8 nitrogen atoms of 7,8-diaminopelargonic acid (DAPA, also called 7,8-diammoniononanoate) to form a ureido ring. This chain is ATP-dependent dethiobiotin synthetase BioD, found in Corynebacterium glutamicum (strain R).